Consider the following 798-residue polypeptide: Palmitoyl thioesterase CPT1C (798 aa).

Residues 1-52 lie on the Cytoplasmic side of the membrane; that stretch reads MAEAHQASSLLSSLSSDGAEVELSSPVWQEIYLCALRSWKRHLWRVWNDFLA. A helical transmembrane segment spans residues 53–75; the sequence is GVVPATPLSWLFLFSTIQLACLL. Topologically, residues 76–103 are lumenal; it reads QLDPSLGLMEKIKELLPDWGGQHHQLQG. The chain crosses the membrane as a helical span at residues 104–126; it reads FLSAAVFASCLWGALIFTLHVAL. Over 127–798 the chain is Cytoplasmic; sequence RLLLSHHGWL…PNTPTSSTNL (672 aa). Histidine 469 serves as the catalytic Proton acceptor. 551 to 563 provides a ligand contact to CoA; the sequence is GKSFIKCCHVSSD. 3 residues coordinate (R)-carnitine: tyrosine 585, serine 587, and threonine 598. Residues 759–798 form a required for interaction with GRIA1 region; the sequence is LFRVGQHFKRQFRGENSDYRYNFLSCKTVDPNTPTSSTNL.

It belongs to the carnitine/choline acetyltransferase family. In terms of assembly, peripherally associated with AMPAR complex. AMPAR complex consists of an inner core made of 4 pore-forming GluA/GRIA proteins (GRIA1, GRIA2, GRIA3 and GRIA4) and 4 major auxiliary subunits arranged in a twofold symmetry. One of the two pairs of distinct binding sites is occupied either by CNIH2, CNIH3 or CACNG2, CACNG3. The other harbors CACNG2, CACNG3, CACNG4, CACNG8 or GSG1L. This inner core of AMPAR complex is complemented by outer core constituents binding directly to the GluA/GRIA proteins at sites distinct from the interaction sites of the inner core constituents. Outer core constituents include at least PRRT1, PRRT2, CKAMP44/SHISA9, FRRS1L and NRN1. The proteins of the inner and outer core serve as a platform for other, more peripherally associated AMPAR constituents, including CPT1C. Alone or in combination, these auxiliary subunits control the gating and pharmacology of the AMPAR complex and profoundly impact their biogenesis and protein processing. Interacts with SACM1L; the interaction regulates SACM1L phosphatidylinositol-3-phosphatase activity and translocation to endoplasmic reticulum/trans Golgi network in a malonyl-CoA dependent manner. Interacts with ATL1. In terms of tissue distribution, predominantly expressed in brain (at protein level) and testis, highly expressed in the hippocampus, amygdala and cerebellum. Expressed in neurons but not astrocytes. Expressed in the ventral horn from spinal cords.

The protein resides in the synapse. It is found in the cell projection. The protein localises to the axon. Its subcellular location is the dendrite. It localises to the dendritic spine. The protein resides in the endoplasmic reticulum membrane. The enzyme catalyses S-hexadecanoyl-L-cysteinyl-[protein] + H2O = L-cysteinyl-[protein] + hexadecanoate + H(+). Functionally, palmitoyl thioesterase specifically expressed in the endoplasmic reticulum of neurons. Modulates the trafficking of the glutamate receptor, AMPAR, to plasma membrane through depalmitoylation of GRIA1. Also regulates AMPR trafficking through the regulation of SACM1L phosphatidylinositol-3-phosphatase activity by interaction in a malonyl-CoA dependent manner. Binds malonyl-CoA and couples malonyl-CoA to ceramide levels, necessary for proper spine maturation and contributing to systemic energy homeostasis and appetite control. Binds to palmitoyl-CoA, but does not have carnitine palmitoyltransferase 1 catalytic activity or at very low levels. The protein is Palmitoyl thioesterase CPT1C (Cpt1c) of Mus musculus (Mouse).